Here is a 127-residue protein sequence, read N- to C-terminus: Large ribosomal subunit protein uL22 (127 aa).

Belongs to the universal ribosomal protein uL22 family. In terms of assembly, part of the 50S ribosomal subunit.

Functionally, this protein binds specifically to 23S rRNA; its binding is stimulated by other ribosomal proteins, e.g. L4, L17, and L20. It is important during the early stages of 50S assembly. It makes multiple contacts with different domains of the 23S rRNA in the assembled 50S subunit and ribosome. The globular domain of the protein is located near the polypeptide exit tunnel on the outside of the subunit, while an extended beta-hairpin is found that lines the wall of the exit tunnel in the center of the 70S ribosome. The protein is Large ribosomal subunit protein uL22 of Methylobacterium nodulans (strain LMG 21967 / CNCM I-2342 / ORS 2060).